The chain runs to 313 residues: Homoserine kinase (313 aa).

92 to 102 (PPGRGLGSSGA) lines the ATP pocket.

This sequence belongs to the GHMP kinase family. Homoserine kinase subfamily.

The protein localises to the cytoplasm. It carries out the reaction L-homoserine + ATP = O-phospho-L-homoserine + ADP + H(+). It participates in amino-acid biosynthesis; L-threonine biosynthesis; L-threonine from L-aspartate: step 4/5. Functionally, catalyzes the ATP-dependent phosphorylation of L-homoserine to L-homoserine phosphate. The sequence is that of Homoserine kinase from Aeropyrum pernix (strain ATCC 700893 / DSM 11879 / JCM 9820 / NBRC 100138 / K1).